A 425-amino-acid polypeptide reads, in one-letter code: 3-phosphoshikimate 1-carboxyvinyltransferase (425 aa).

3-phosphoshikimate is bound by residues Lys22, Ser23, and Arg27. Residue Lys22 coordinates phosphoenolpyruvate. Residues Gly95 and Arg123 each coordinate phosphoenolpyruvate. 3-phosphoshikimate is bound by residues Ser169, Ser170, Gln171, Ser197, Asp313, Asn336, and Lys340. Gln171 is a phosphoenolpyruvate binding site. Residue Asp313 is the Proton acceptor of the active site. Phosphoenolpyruvate is bound by residues Arg344, Arg386, and Lys411.

Belongs to the EPSP synthase family. In terms of assembly, monomer.

It is found in the cytoplasm. It carries out the reaction 3-phosphoshikimate + phosphoenolpyruvate = 5-O-(1-carboxyvinyl)-3-phosphoshikimate + phosphate. It functions in the pathway metabolic intermediate biosynthesis; chorismate biosynthesis; chorismate from D-erythrose 4-phosphate and phosphoenolpyruvate: step 6/7. Its function is as follows. Catalyzes the transfer of the enolpyruvyl moiety of phosphoenolpyruvate (PEP) to the 5-hydroxyl of shikimate-3-phosphate (S3P) to produce enolpyruvyl shikimate-3-phosphate and inorganic phosphate. The polypeptide is 3-phosphoshikimate 1-carboxyvinyltransferase (Pseudoalteromonas translucida (strain TAC 125)).